The primary structure comprises 152 residues: Globin-1 subunit beta (152 aa).

Serine 2 is subject to N-acetylserine. Residues 12-152 (VSNADQKDLL…SLVAVVQAAL (141 aa)) enclose the Globin domain. Heme b is bound by residues histidine 72 and histidine 104.

This sequence belongs to the globin family. Heterotetramer of two alpha chains and two beta chains.

This is Globin-1 subunit beta from Anadara trapezia (Sydney cockle).